Consider the following 429-residue polypeptide: Adenylosuccinate synthetase (429 aa).

Residues 12–18 and 40–42 each bind GTP; these read GDEGKGK and GHT. Asp-13 functions as the Proton acceptor in the catalytic mechanism. 2 residues coordinate Mg(2+): Asp-13 and Gly-40. IMP contacts are provided by residues 13–16, 38–41, Thr-129, Arg-143, Gln-224, Thr-239, and Arg-303; these read DEGK and NAGH. Residue His-41 is the Proton donor of the active site. 299–305 is a substrate binding site; the sequence is VTTGRAR. GTP is bound by residues Arg-305, 331 to 333, and 413 to 415; these read KLD and GVG.

This sequence belongs to the adenylosuccinate synthetase family. Homodimer. The cofactor is Mg(2+).

It is found in the cytoplasm. The catalysed reaction is IMP + L-aspartate + GTP = N(6)-(1,2-dicarboxyethyl)-AMP + GDP + phosphate + 2 H(+). It functions in the pathway purine metabolism; AMP biosynthesis via de novo pathway; AMP from IMP: step 1/2. In terms of biological role, plays an important role in the de novo pathway of purine nucleotide biosynthesis. Catalyzes the first committed step in the biosynthesis of AMP from IMP. This Rhodococcus jostii (strain RHA1) protein is Adenylosuccinate synthetase.